Here is a 305-residue protein sequence, read N- to C-terminus: UDP-3-O-acyl-N-acetylglucosamine deacetylase (305 aa).

Positions 79, 238, and 242 each coordinate Zn(2+). Histidine 265 functions as the Proton donor in the catalytic mechanism.

Belongs to the LpxC family. Requires Zn(2+) as cofactor.

It catalyses the reaction a UDP-3-O-[(3R)-3-hydroxyacyl]-N-acetyl-alpha-D-glucosamine + H2O = a UDP-3-O-[(3R)-3-hydroxyacyl]-alpha-D-glucosamine + acetate. Its pathway is glycolipid biosynthesis; lipid IV(A) biosynthesis; lipid IV(A) from (3R)-3-hydroxytetradecanoyl-[acyl-carrier-protein] and UDP-N-acetyl-alpha-D-glucosamine: step 2/6. Functionally, catalyzes the hydrolysis of UDP-3-O-myristoyl-N-acetylglucosamine to form UDP-3-O-myristoylglucosamine and acetate, the committed step in lipid A biosynthesis. In Shewanella woodyi (strain ATCC 51908 / MS32), this protein is UDP-3-O-acyl-N-acetylglucosamine deacetylase.